The primary structure comprises 479 residues: Glutamate receptor U1 (479 aa).

The first 17 residues, 1–17 (MEKSLLFLFAVTLLSVG), serve as a signal peptide directing secretion. The Extracellular portion of the chain corresponds to 18–163 (CTDAGESKGS…LFGFLTPFSK (146 aa)). A glycan (N-linked (GlcNAc...) asparagine) is linked at asparagine 79. The helical transmembrane segment at 164–184 (ETWIGILVAYMVTSLCLFLVG) threads the bilayer. The Cytoplasmic segment spans residues 185 to 229 (RLSPCEWTELSTEQNNFTFLNSLWFGAGAFTLQGAEPHPKSVSAR). A helical membrane pass occupies residues 230–250 (IIAVIWWIFSIVLVAAYIASF). The Extracellular segment spans residues 251-414 (AAFLNSDSVQ…AGWNPVQPHT (164 aa)). N-linked (GlcNAc...) asparagine glycosylation is present at asparagine 282. The chain crosses the membrane as a helical span at residues 415–435 (LGGIFLILGIGLALGVIAALI). Residues 436–479 (ELVLKARNNADQQKKSCCSAFSEEMGERLGTNKENQGAVDSVKS) lie on the Cytoplasmic side of the membrane.

This sequence belongs to the glutamate-gated ion channel (TC 1.A.10.1) family. In terms of assembly, homomeric.

It is found in the cell membrane. It localises to the postsynaptic cell membrane. Its function is as follows. Receptor for glutamate. L-glutamate acts as an excitatory neurotransmitter at many synapses in the central nervous system. The postsynaptic actions of Glu are mediated by a variety of receptors that are named according to their selective agonists. This receptor binds domoate &gt; kainate &gt; AMPA &gt; NBQX &gt; glutamate. This is Glutamate receptor U1 (kbp) from Xenopus laevis (African clawed frog).